The following is a 1732-amino-acid chain: Serine/threonine-protein kinase MRCK alpha (1732 aa).

Positions 77–343 (FEILKVIGRG…IEDFKKHPFF (267 aa)) constitute a Protein kinase domain. ATP is bound by residues 83–91 (IGRGAFGEV) and Lys106. The active-site Proton acceptor is Asp201. Residues Ser222 and Ser234 each carry the phosphoserine; by autocatalysis modification. Thr240 bears the Phosphothreonine; by autocatalysis mark. Positions 344 to 414 (SGIDWDNIRN…TSSCVLSDRS (71 aa)) constitute an AGC-kinase C-terminal domain. Coiled coils occupy residues 437–820 (NNLA…WEAQ) and 880–943 (LELQ…SEKG). Residues 968 to 1003 (ERSPSCTPASKGRRTVDSTPLSVHTPTLRKKGCPGS) are disordered. A Phorbol-ester/DAG-type zinc finger spans residues 1012–1062 (THQFFVKSFTTPTKCHQCTSLMVGLIRQGCSCEVCGFSCHITCVNKAPTTC). The PH domain occupies 1082–1201 (GTAYEGHVRI…WVGVLSELHK (120 aa)). Ser1127 carries the post-translational modification Phosphoserine. Residues 1227 to 1499 (IKTTQAAAII…RPLNNEGSLN (273 aa)) form the CNH domain. Residue Ser1545 is modified to Phosphoserine. One can recognise a CRIB domain in the interval 1571–1584 (ISNPTNFNHIAHMG). Positions 1591–1732 (ILKDLPMNPR…ESTDRGSWDP (142 aa)) are disordered. Polar residues predominate over residues 1604 to 1619 (SRTVFSGSVSIPSITK). Phosphoserine is present on residues Ser1611, Ser1613, Ser1629, Ser1651, Ser1664, Ser1669, and Ser1693. The segment covering 1625–1640 (GRSMSASSGLSARSSA) has biased composition (low complexity). Positions 1665-1674 (PSEGSLSSGG) are enriched in low complexity. Residues 1697 to 1707 (STASNSSNLSS) show a composition bias toward low complexity. A phosphoserine mark is found at Ser1719 and Ser1721.

It belongs to the protein kinase superfamily. AGC Ser/Thr protein kinase family. DMPK subfamily. In terms of assembly, homodimer and homotetramer via the coiled coil regions. Interacts tightly with GTP-bound but not GDP-bound CDC42. Forms a tripartite complex with MYO18A and LURAP1 with the latter acting as an adapter connecting CDC42BPA and MYO18A. LURAP1 binding results in activation of CDC42BPA by abolition of its negative autoregulation. Interacts with LURAP1. Interacts (via AGC-kinase C-terminal domain) with FAM89B/LRAP25 (via LRR repeat). Forms a tripartite complex with FAM89B/LRAP25 and LIMK1. Mg(2+) serves as cofactor. Post-translationally, proteolytically cleaved by caspases upon apoptosis induction. The cleavage at Asp-478 by CASP3 increases its kinase activity (in vitro). As to expression, abundant in the heart, brain, skeletal muscle, kidney, and pancreas, with little or no expression in the lung and liver.

The protein localises to the cytoplasm. It is found in the cell projection. The protein resides in the lamellipodium. The enzyme catalyses L-seryl-[protein] + ATP = O-phospho-L-seryl-[protein] + ADP + H(+). The catalysed reaction is L-threonyl-[protein] + ATP = O-phospho-L-threonyl-[protein] + ADP + H(+). Maintained in an inactive, closed conformation by an interaction between the kinase domain and the negative autoregulatory C-terminal coiled-coil region. Agonist binding to the phorbol ester binding site disrupts this, releasing the kinase domain to allow N-terminus-mediated dimerization and kinase activation by transautophosphorylation. Inhibited by chelerythrine chloride. Functionally, serine/threonine-protein kinase which is an important downstream effector of CDC42 and plays a role in the regulation of cytoskeleton reorganization and cell migration. Regulates actin cytoskeletal reorganization via phosphorylation of PPP1R12C and MYL9/MLC2. In concert with MYO18A and LURAP1, is involved in modulating lamellar actomyosin retrograde flow that is crucial to cell protrusion and migration. Phosphorylates: PPP1R12A, LIMK1 and LIMK2. May play a role in TFRC-mediated iron uptake. In concert with FAM89B/LRAP25 mediates the targeting of LIMK1 to the lamellipodium resulting in its activation and subsequent phosphorylation of CFL1 which is important for lamellipodial F-actin regulation. Triggers the formation of an extrusion apical actin ring required for epithelial extrusion of apoptotic cells. In Homo sapiens (Human), this protein is Serine/threonine-protein kinase MRCK alpha.